The primary structure comprises 411 residues: Glutamate dehydrogenase 2, mitochondrial (411 aa).

The N-terminal 18 residues, 1–18 (MNALAATSRNFRQAARLL), are a transit peptide targeting the mitochondrion. Lys102 is an active-site residue.

This sequence belongs to the Glu/Leu/Phe/Val dehydrogenases family. As to expression, expressed in roots. Expressed ubiquitously in various tissues.

Its subcellular location is the mitochondrion. The enzyme catalyses L-glutamate + NAD(+) + H2O = 2-oxoglutarate + NH4(+) + NADH + H(+). It carries out the reaction L-glutamate + NADP(+) + H2O = 2-oxoglutarate + NH4(+) + NADPH + H(+). This chain is Glutamate dehydrogenase 2, mitochondrial (GDH2), found in Oryza sativa subsp. japonica (Rice).